The sequence spans 352 residues: Ferrochelatase (352 aa).

Fe cation is bound by residues H222 and E303.

The protein belongs to the ferrochelatase family.

The protein localises to the cytoplasm. It carries out the reaction heme b + 2 H(+) = protoporphyrin IX + Fe(2+). It functions in the pathway porphyrin-containing compound metabolism; protoheme biosynthesis; protoheme from protoporphyrin-IX: step 1/1. Catalyzes the ferrous insertion into protoporphyrin IX. This is Ferrochelatase from Brucella melitensis biotype 2 (strain ATCC 23457).